The chain runs to 520 residues: DDB1- and CUL4-associated factor 17 (520 aa).

The next 2 membrane-spanning stretches (helical) occupy residues 186-206 and 222-242; these read VLLYLAVFRVLPFSLVGILEI and GILIVMYSSGLVRLYSFQTIA.

Interacts with DDB1, CUL4A and CUL4B. Ubiquitously expressed.

The protein resides in the membrane. It is found in the nucleus. Its subcellular location is the nucleolus. It functions in the pathway protein modification; protein ubiquitination. May function as a substrate receptor for CUL4-DDB1 E3 ubiquitin-protein ligase complex. The chain is DDB1- and CUL4-associated factor 17 (DCAF17) from Homo sapiens (Human).